Consider the following 146-residue polypeptide: uncharacterized protein (146 aa).

The region spanning 31-119 is the Toprim domain; it reads EKVMIVEGKS…RAYKEVAAAP (89 aa).

This is an uncharacterized protein from Bacillus subtilis (strain 168).